Consider the following 336-residue polypeptide: O-methyltransferase 2 (336 aa).

5 residues coordinate S-adenosyl-L-methionine: glycine 170, aspartate 198, asparagine 221, phenylalanine 222, and lysine 237. Residue histidine 241 is the Proton acceptor of the active site.

This sequence belongs to the class I-like SAM-binding methyltransferase superfamily. Cation-independent O-methyltransferase family. COMT subfamily.

The catalysed reaction is (3,5-dichloro-2,4,6-trihydroxyphenyl)hexan-1-one + S-adenosyl-L-methionine = 1-(3,5-dichloro-2,6-dihydroxy-4-methoxyphenyl)hexan-1-one + S-adenosyl-L-homocysteine + H(+). This is O-methyltransferase 2 (omt2) from Dictyostelium discoideum (Social amoeba).